Here is a 38-residue protein sequence, read N- to C-terminus: 4 kDa defensin (38 aa).

3 disulfide bridges follow: Cys4/Cys25, Cys11/Cys33, and Cys15/Cys35.

The protein belongs to the invertebrate defensin family. Type 2 subfamily.

The protein resides in the secreted. Functionally, dual-function peptide with antimicrobial and potassium channel-blocking activities. Shows inhibitory activity against Gram-positive bacteria such as M.luteus, S.aureus, B.subtilis, and M.luteus as well as methicillin-resistant S.aureus (MIC=0.1-20 uM). Does not act on bacteria by disrupting membranes. Also moderately inhibits Kv1.1/KCNA1, Kv1.2/KCNA2, and Kv1.3/KCNA3 potassium channels. Inhibits potassium channels by interacting with the pore region. Does not show hemolytic activity. In Leiurus hebraeus (Hebrew deathstalker scorpion), this protein is 4 kDa defensin.